A 736-amino-acid polypeptide reads, in one-letter code: Elongation factor 2 (736 aa).

In terms of domain architecture, tr-type G spans 18 to 262 (TRVRNIGIIA…AVIKFVPNPV (245 aa)). GTP is bound by residues 27–34 (AHVDHGKT), 93–97 (DTPGH), and 147–150 (NKVD). Diphthamide is present on histidine 603.

This sequence belongs to the TRAFAC class translation factor GTPase superfamily. Classic translation factor GTPase family. EF-G/EF-2 subfamily.

The protein resides in the cytoplasm. Catalyzes the GTP-dependent ribosomal translocation step during translation elongation. During this step, the ribosome changes from the pre-translocational (PRE) to the post-translocational (POST) state as the newly formed A-site-bound peptidyl-tRNA and P-site-bound deacylated tRNA move to the P and E sites, respectively. Catalyzes the coordinated movement of the two tRNA molecules, the mRNA and conformational changes in the ribosome. This is Elongation factor 2 from Metallosphaera sedula (strain ATCC 51363 / DSM 5348 / JCM 9185 / NBRC 15509 / TH2).